The primary structure comprises 69 residues: Atypical cationic antimicrobial peptide (69 aa).

An N-terminal signal peptide occupies residues 1–22 (MAFLKKSLFLVLFLGLVSLSIC). Positions 23-45 (DEEKRENEDEENQEDDEQSEMRR) are excised as a propeptide. Residues 25–45 (EKRENEDEENQEDDEQSEMRR) form a disordered region. Residues 30–40 (EDEENQEDDEQ) show a composition bias toward acidic residues.

The protein belongs to the frog skin active peptide (FSAP) family. Monomer and/or weakly self-associated, oligomer, and amyloid-like fibril. Can adopt a monomeric nonamphipathic alpha-helical conformation, possibly with the aid of its cationic N- and C-termini, when bound to anionic membranes. Forms stable and ordered beta-sheet aggregates in aqueous environment or when bound to anionic or zwitterionic phospholipid vesicles. Expressed by the skin glands.

The protein localises to the secreted. It is found in the target cell membrane. In terms of biological role, atypical cationic antimicrobial peptide with potent activity against Gram-negative and Gram-positive bacteria. Acts by inducing permeabilization of bacterial membrane. In vitro, also shows chemoattractant activity, which is mediated through a G protein-coupled receptor (probably FPR2 coupled to the ERK1/2 MAPK kinase pathway). Has slow-kinetic self-association and amyloid-like properties that modulate its activity. The soluble, weakly self-associated forms act on leukocytes to promote chemotaxis but have low antibacterial activity, the oligomers exhibit potent antimicrobial activity, whereas the amyloid-like fibrils have a very weak antibacterial activity. The membrane composition has a great influence on the peptide behavior. The peptide induces membrane leakage and insertion to a lesser extent in model membranes of the anionic lipid phosphatidylglycerol (PG) than in the model membranes of the zwitterionic lipid phosphatidylcholine (PC) vesicles. It forms more fibrils in PC than in PG. Membrane perturbations are more observed in the presence of PG than in the presence of PC. The peptide shows low hemolytic activity. This is Atypical cationic antimicrobial peptide from Phyllomedusa sauvagei (Sauvage's leaf frog).